We begin with the raw amino-acid sequence, 376 residues long: ATP synthase gamma chain, chloroplastic (376 aa).

The transit peptide at 1-52 directs the protein to the chloroplast; it reads MSCSNVTMLVSSKPSLPDASNLSFRSAFNPFQLPSQNSSSSCTPSRPTSIQC. The active site involves C133. Residues C250 and C256 are joined by a disulfide bond.

The protein belongs to the ATPase gamma chain family. In terms of assembly, F-type ATPases have 2 components, CF(1) - the catalytic core - and CF(0) - the membrane proton channel. CF(1) has five subunits: alpha(3), beta(3), gamma(1), delta(1), epsilon(1). CF(0) has four main subunits: a, b, b' and c.

It localises to the plastid. It is found in the chloroplast thylakoid membrane. Produces ATP from ADP in the presence of a proton gradient across the membrane. The gamma chain is believed to be important in regulating ATPase activity and the flow of protons through the CF(0) complex. The sequence is that of ATP synthase gamma chain, chloroplastic (ATPC) from Pisum sativum (Garden pea).